The sequence spans 513 residues: Glucose-1-phosphate adenylyltransferase small subunit, chloroplastic/amyloplastic (513 aa).

A chloroplast-targeting transit peptide spans 1-64 (MAMAAAASPS…RRPFFFSPRA (64 aa)).

It belongs to the bacterial/plant glucose-1-phosphate adenylyltransferase family. In terms of assembly, heterotetramer. As to expression, leaves and starchy endosperm.

It is found in the plastid. Its subcellular location is the chloroplast. The protein resides in the amyloplast. The catalysed reaction is alpha-D-glucose 1-phosphate + ATP + H(+) = ADP-alpha-D-glucose + diphosphate. The protein operates within glycan biosynthesis; starch biosynthesis. Activated by 3'phosphoglycerate, inhibited by orthophosphate. Allosteric regulation. Its function is as follows. This protein plays a role in synthesis of starch. It catalyzes the synthesis of the activated glycosyl donor, ADP-glucose from Glc-1-P and ATP. This chain is Glucose-1-phosphate adenylyltransferase small subunit, chloroplastic/amyloplastic, found in Hordeum vulgare (Barley).